The sequence spans 154 residues: Transcriptional repressor NrdR (154 aa).

Residues cysteine 3–cysteine 34 fold into a zinc finger. The ATP-cone domain occupies proline 49–alanine 139.

It belongs to the NrdR family. Requires Zn(2+) as cofactor.

Its function is as follows. Negatively regulates transcription of bacterial ribonucleotide reductase nrd genes and operons by binding to NrdR-boxes. The polypeptide is Transcriptional repressor NrdR (Dechloromonas aromatica (strain RCB)).